Reading from the N-terminus, the 812-residue chain is DNA gyrase subunit A (812 aa).

The 466-residue stretch at 31–496 (IPDVRDGLKP…GNTDFNVEDV (466 aa)) folds into the Topo IIA-type catalytic domain. The active-site O-(5'-phospho-DNA)-tyrosine intermediate is Y119. A GyrA-box motif is present at residues 523–529 (QGRGGKG).

Belongs to the type II topoisomerase GyrA/ParC subunit family. Heterotetramer, composed of two GyrA and two GyrB chains. In the heterotetramer, GyrA contains the active site tyrosine that forms a transient covalent intermediate with DNA, while GyrB binds cofactors and catalyzes ATP hydrolysis.

It localises to the cytoplasm. The catalysed reaction is ATP-dependent breakage, passage and rejoining of double-stranded DNA.. Functionally, a type II topoisomerase that negatively supercoils closed circular double-stranded (ds) DNA in an ATP-dependent manner to modulate DNA topology and maintain chromosomes in an underwound state. Negative supercoiling favors strand separation, and DNA replication, transcription, recombination and repair, all of which involve strand separation. Also able to catalyze the interconversion of other topological isomers of dsDNA rings, including catenanes and knotted rings. Type II topoisomerases break and join 2 DNA strands simultaneously in an ATP-dependent manner. The sequence is that of DNA gyrase subunit A from Kosmotoga olearia (strain ATCC BAA-1733 / DSM 21960 / TBF 19.5.1).